A 199-amino-acid polypeptide reads, in one-letter code: Holliday junction branch migration complex subunit RuvA (199 aa).

A domain I region spans residues 1 to 64 (MFAYIKGTVE…EDIAVLYGFG (64 aa)). Residues 65–143 (TVEELTMFEM…KEQLTSSIPM (79 aa)) are domain II. Residues 144 to 151 (TSPENNEV) form a flexible linker region. A domain III region spans residues 152–199 (TGDSVLSEAVSALMVLGYGSAEASSTISGIYEKGISVEELVKKALKSL).

The protein belongs to the RuvA family. As to quaternary structure, homotetramer. Forms an RuvA(8)-RuvB(12)-Holliday junction (HJ) complex. HJ DNA is sandwiched between 2 RuvA tetramers; dsDNA enters through RuvA and exits via RuvB. An RuvB hexamer assembles on each DNA strand where it exits the tetramer. Each RuvB hexamer is contacted by two RuvA subunits (via domain III) on 2 adjacent RuvB subunits; this complex drives branch migration. In the full resolvosome a probable DNA-RuvA(4)-RuvB(12)-RuvC(2) complex forms which resolves the HJ.

It is found in the cytoplasm. Functionally, the RuvA-RuvB-RuvC complex processes Holliday junction (HJ) DNA during genetic recombination and DNA repair, while the RuvA-RuvB complex plays an important role in the rescue of blocked DNA replication forks via replication fork reversal (RFR). RuvA specifically binds to HJ cruciform DNA, conferring on it an open structure. The RuvB hexamer acts as an ATP-dependent pump, pulling dsDNA into and through the RuvAB complex. HJ branch migration allows RuvC to scan DNA until it finds its consensus sequence, where it cleaves and resolves the cruciform DNA. The sequence is that of Holliday junction branch migration complex subunit RuvA from Ruminiclostridium cellulolyticum (strain ATCC 35319 / DSM 5812 / JCM 6584 / H10) (Clostridium cellulolyticum).